A 118-amino-acid chain; its full sequence is p-cumate 2,3-dioxygenase system, ferredoxin component (118 aa).

The 98-residue stretch at 14–111 folds into the Rieske domain; the sequence is VGLCATDDVA…VTVEGGQIFV (98 aa). Residues Cys-54, His-56, Cys-74, and His-77 each coordinate [2Fe-2S] cluster.

The protein belongs to the bacterial ring-hydroxylating dioxygenase ferredoxin component family. In terms of assembly, the p-cumate 2,3-dioxygenase multicomponent enzyme system is composed of an electron transfer component and a dioxygenase component (iron sulfur protein (ISP)). The electron transfer component is composed of a ferredoxin reductase (CmtAa) and a ferredoxin (CmtAd), and the dioxygenase component is formed of a large alpha subunit (CmtAb) and a small beta subunit (CmtAc). [2Fe-2S] cluster is required as a cofactor.

It functions in the pathway aromatic compound metabolism; p-cumate degradation; acetaldehyde and pyruvate from p-cumate. Its function is as follows. Component of the p-cumate 2,3-dioxygenase multicomponent enzyme system which catalyzes the incorporation of both atoms of molecular oxygen into p-cumate to form cis-2,3-dihydroxy-2,3-dihydro-p-cumate. Functions as an intermediate electron transfer protein via a specific interaction with iron sulfur protein components (ISP)(CmtAb and CmtAc). The polypeptide is p-cumate 2,3-dioxygenase system, ferredoxin component (Pseudomonas putida (Arthrobacter siderocapsulatus)).